A 164-amino-acid polypeptide reads, in one-letter code: UPF0303 protein RHECIAT_CH0003058 (164 aa).

Belongs to the UPF0303 family.

This is UPF0303 protein RHECIAT_CH0003058 from Rhizobium etli (strain CIAT 652).